The primary structure comprises 402 residues: MKREKIALAYSGGLDTSVMIKWLKDKYDADIIAVTGNLGQEKEIENLEQKAFDTGASGFSFLDLRKEFVENYIWPALKAGALYEEVYPLATALGRPLLAKALVDVALSEDCTMIAHGCTGKGNDQVRFEVTFASLAPHLKVLAPLREWEFNSREAEMAYAEKHGIPVSATKKSPYSIDENIWGISIECGVLEDPMVAPPEDAYQITTSPEKAPDNAAVIDIEFEQGVPVALDGRKMEGLDLIVELNKHGAAHGVGRLDMIENRVVGIKSREIYEAPAATILHFAHRELERLTLEKTVFQYKNTISQDYANLIYNGTWFSPMREALDGFVDATQKHVTGLVRVKLFKGSVTLLGRTSPWSLYNEELATYTEADTFNHKAAEGFIHLYGLGLKTYSEVQANNRK.

Residue 9–17 coordinates ATP; it reads AYSGGLDTS. Tyr-87 serves as a coordination point for L-citrulline. Gly-117 contributes to the ATP binding site. Thr-119, Asn-123, and Asp-124 together coordinate L-aspartate. L-citrulline is bound at residue Asn-123. L-citrulline contacts are provided by Arg-127, Ser-176, Ser-185, Glu-261, and Tyr-273.

This sequence belongs to the argininosuccinate synthase family. Type 1 subfamily. Homotetramer.

It is found in the cytoplasm. It carries out the reaction L-citrulline + L-aspartate + ATP = 2-(N(omega)-L-arginino)succinate + AMP + diphosphate + H(+). Its pathway is amino-acid biosynthesis; L-arginine biosynthesis; L-arginine from L-ornithine and carbamoyl phosphate: step 2/3. The chain is Argininosuccinate synthase from Chlorobium phaeobacteroides (strain BS1).